Consider the following 325-residue polypeptide: Ribosomal RNA small subunit methyltransferase H (325 aa).

S-adenosyl-L-methionine contacts are provided by residues 41–43 (GGH), Asp60, Tyr87, Asp108, and Gln115. The tract at residues 295 to 325 (DDDEKAANPRAAPVRLRAAERTRASEDRRGS) is disordered. Residues 311–325 (RAAERTRASEDRRGS) are compositionally biased toward basic and acidic residues.

Belongs to the methyltransferase superfamily. RsmH family.

Its subcellular location is the cytoplasm. It carries out the reaction cytidine(1402) in 16S rRNA + S-adenosyl-L-methionine = N(4)-methylcytidine(1402) in 16S rRNA + S-adenosyl-L-homocysteine + H(+). Specifically methylates the N4 position of cytidine in position 1402 (C1402) of 16S rRNA. This Leifsonia xyli subsp. xyli (strain CTCB07) protein is Ribosomal RNA small subunit methyltransferase H.